The following is a 486-amino-acid chain: Galactose-1-phosphate uridylyltransferase (486 aa).

Belongs to the galactose-1-phosphate uridylyltransferase type 2 family.

The protein localises to the cytoplasm. The enzyme catalyses alpha-D-galactose 1-phosphate + UDP-alpha-D-glucose = alpha-D-glucose 1-phosphate + UDP-alpha-D-galactose. Its pathway is carbohydrate metabolism; galactose metabolism. This Lacticaseibacillus paracasei (strain ATCC 334 / BCRC 17002 / CCUG 31169 / CIP 107868 / KCTC 3260 / NRRL B-441) (Lactobacillus paracasei) protein is Galactose-1-phosphate uridylyltransferase.